The sequence spans 528 residues: Abrin-d (528 aa).

Residue Gln1 is modified to Pyrrolidone carboxylic acid. Residue Glu164 is part of the active site. The N-linked (GlcNAc...) asparagine glycan is linked to Asn200. 3 disulfide bridges follow: Cys247-Cys269, Cys286-Cys305, and Cys329-Cys346. The region spanning 273–400 (YEPTVRIGGR…YLMRQGWRTG (128 aa)) is the Ricin B-type lectin 1 domain. The stretch at 283–325 (DGMCVDVYDDGYHNGNRIIAWKCKDRLEENQLWTLKSDLTIRS) is one 1-alpha repeat. Residues 326–366 (NGKCLTTEGYAPGNYVMIYDCTSAVAEATYWEIWDNGTIIN) form a 1-beta repeat. Asn361 and Asn401 each carry an N-linked (GlcNAc...) asparagine glycan. A 1-gamma repeat occupies 369–401 (SALVLSAESSSMGGTLTVQTNEYLMRQGWRTGN). The 125-residue stretch at 403–527 (TSPFVTSISG…GKPNQIWLTL (125 aa)) folds into the Ricin B-type lectin 2 domain. The 2-alpha repeat unit spans residues 414–449 (SDLCMQAQGSNVWLADCDNNKKEQQWALYTDGSIRS). Intrachain disulfides connect Cys417–Cys430 and Cys456–Cys473. Residues 453–492 (TNNCLTSKDHKQGSPIVLMACSNGWASQRWLFKNDGSIYS) form a 2-beta repeat. The 2-gamma repeat unit spans residues 495–528 (DDMVMDVKGSDPSLKQIILWPYTGKPNQIWLTLF).

In the N-terminal section; belongs to the ribosome-inactivating protein family. Type 2 RIP subfamily. In terms of assembly, disulfide-linked dimer of A and B chains.

It catalyses the reaction Endohydrolysis of the N-glycosidic bond at one specific adenosine on the 28S rRNA.. Functionally, the A chain is responsible for inhibiting protein synthesis through the catalytic inactivation of 60S ribosomal subunits by removing adenine from position 4,324 of 28S rRNA. Its function is as follows. The B chain is a galactose-specific lectin that facilitates the binding of abrin to the cell membrane that precedes endocytosis. This chain is Abrin-d, found in Abrus precatorius (Indian licorice).